The chain runs to 303 residues: Signal recognition particle receptor FtsY (303 aa).

Residues 108-115, 190-194, and 254-257 each bind GTP; these read GVNGVGKT, DTAGR, and TKLD.

This sequence belongs to the GTP-binding SRP family. FtsY subfamily. As to quaternary structure, part of the signal recognition particle protein translocation system, which is composed of SRP and FtsY. SRP is a ribonucleoprotein composed of Ffh and a 4.5S RNA molecule.

It is found in the cell inner membrane. The protein resides in the cytoplasm. The enzyme catalyses GTP + H2O = GDP + phosphate + H(+). In terms of biological role, involved in targeting and insertion of nascent membrane proteins into the cytoplasmic membrane. Acts as a receptor for the complex formed by the signal recognition particle (SRP) and the ribosome-nascent chain (RNC). Interaction with SRP-RNC leads to the transfer of the RNC complex to the Sec translocase for insertion into the membrane, the hydrolysis of GTP by both Ffh and FtsY, and the dissociation of the SRP-FtsY complex into the individual components. The protein is Signal recognition particle receptor FtsY of Rickettsia prowazekii (strain Madrid E).